The following is a 101-amino-acid chain: Small ribosomal subunit protein bS18c (101 aa).

It belongs to the bacterial ribosomal protein bS18 family. As to quaternary structure, part of the 30S ribosomal subunit.

The protein localises to the plastid. Its subcellular location is the chloroplast. This chain is Small ribosomal subunit protein bS18c, found in Carica papaya (Papaya).